The chain runs to 446 residues: Tubulin gamma chain (446 aa).

Residue 142–148 participates in GTP binding; the sequence is AGGTGSG.

This sequence belongs to the tubulin family.

It localises to the cytoplasm. The protein resides in the cytoskeleton. The protein localises to the microtubule organizing center. Its subcellular location is the spindle pole body. Its function is as follows. Tubulin is the major constituent of microtubules. The gamma chain is found at microtubule organizing centers (MTOC) such as the spindle poles or the centrosome, suggesting that it is involved in the minus-end nucleation of microtubule assembly. The protein is Tubulin gamma chain (tug1) of Schizosaccharomyces japonicus (Fission yeast).